A 148-amino-acid polypeptide reads, in one-letter code: [Ribosomal protein bS18]-alanine N-acetyltransferase (148 aa).

Residues 2 to 147 enclose the N-acetyltransferase domain; sequence NTISILSTTD…DAIIMALPIS (146 aa). Acetyl-CoA-binding positions include 69–71 and 77–82; these read IAV and RRGLGR. Glu-103 serves as the catalytic Proton acceptor. Asn-108 is an acetyl-CoA binding site. The active-site Proton donor is Tyr-115.

Belongs to the acetyltransferase family. RimI subfamily.

The protein resides in the cytoplasm. It carries out the reaction N-terminal L-alanyl-[ribosomal protein bS18] + acetyl-CoA = N-terminal N(alpha)-acetyl-L-alanyl-[ribosomal protein bS18] + CoA + H(+). Functionally, acetylates the N-terminal alanine of ribosomal protein bS18. The protein is [Ribosomal protein bS18]-alanine N-acetyltransferase of Salmonella typhimurium (strain LT2 / SGSC1412 / ATCC 700720).